A 962-amino-acid chain; its full sequence is Glycine dehydrogenase (decarboxylating) (962 aa).

Position 709 is an N6-(pyridoxal phosphate)lysine (lysine 709).

It belongs to the GcvP family. In terms of assembly, the glycine cleavage system is composed of four proteins: P, T, L and H. The cofactor is pyridoxal 5'-phosphate.

The catalysed reaction is N(6)-[(R)-lipoyl]-L-lysyl-[glycine-cleavage complex H protein] + glycine + H(+) = N(6)-[(R)-S(8)-aminomethyldihydrolipoyl]-L-lysyl-[glycine-cleavage complex H protein] + CO2. The glycine cleavage system catalyzes the degradation of glycine. The P protein binds the alpha-amino group of glycine through its pyridoxal phosphate cofactor; CO(2) is released and the remaining methylamine moiety is then transferred to the lipoamide cofactor of the H protein. The chain is Glycine dehydrogenase (decarboxylating) from Shewanella baltica (strain OS223).